Here is a 443-residue protein sequence, read N- to C-terminus: Phosphoglucosamine mutase (443 aa).

Ser-102 acts as the Phosphoserine intermediate in catalysis. Residues Ser-102, Asp-241, Asp-243, and Asp-245 each coordinate Mg(2+). Residue Ser-102 is modified to Phosphoserine.

This sequence belongs to the phosphohexose mutase family. The cofactor is Mg(2+). Post-translationally, activated by phosphorylation.

It carries out the reaction alpha-D-glucosamine 1-phosphate = D-glucosamine 6-phosphate. Its function is as follows. Catalyzes the conversion of glucosamine-6-phosphate to glucosamine-1-phosphate. The sequence is that of Phosphoglucosamine mutase from Polaromonas naphthalenivorans (strain CJ2).